The chain runs to 151 residues: 6,7-dimethyl-8-ribityllumazine synthase (151 aa).

5-amino-6-(D-ribitylamino)uracil is bound by residues Phe-15, 49–51, and 73–75; these read AVE and AVI. 78–79 provides a ligand contact to (2S)-2-hydroxy-3-oxobutyl phosphate; it reads ET. His-81 functions as the Proton donor in the catalytic mechanism. Residue Phe-106 coordinates 5-amino-6-(D-ribitylamino)uracil. Arg-120 is a (2S)-2-hydroxy-3-oxobutyl phosphate binding site.

It belongs to the DMRL synthase family. Forms an icosahedral capsid composed of 60 subunits, arranged as a dodecamer of pentamers.

The catalysed reaction is (2S)-2-hydroxy-3-oxobutyl phosphate + 5-amino-6-(D-ribitylamino)uracil = 6,7-dimethyl-8-(1-D-ribityl)lumazine + phosphate + 2 H2O + H(+). Its pathway is cofactor biosynthesis; riboflavin biosynthesis; riboflavin from 2-hydroxy-3-oxobutyl phosphate and 5-amino-6-(D-ribitylamino)uracil: step 1/2. Functionally, catalyzes the formation of 6,7-dimethyl-8-ribityllumazine by condensation of 5-amino-6-(D-ribitylamino)uracil with 3,4-dihydroxy-2-butanone 4-phosphate. This is the penultimate step in the biosynthesis of riboflavin. The polypeptide is 6,7-dimethyl-8-ribityllumazine synthase (Coxiella burnetii (strain CbuG_Q212) (Coxiella burnetii (strain Q212))).